The primary structure comprises 266 residues: MRKNTYAMRYVAGQPAERILPPGSFASIGQALPAGEPLSSEERIRILVWNIFKQQRAEWLSVLKNYGKDAHLVLLQEAQTTPELVQFATANYLAADQVPAFVLPQHPSGVMTLSAAHPVYCCPLREREPILRLAKSALVTVYPLPDTRLLMVVNVHAVNFSLGVDVYSKQLLPIGDQIAHHSGPVIMAGDFNTWSRPRMNALYRFAREMSLRQVRFTDDQRRRAFGRPLDFVFYRGLNVNEASVLVTRASDHNPLLVEFSPGKPEQ.

This sequence belongs to the UPF0294 family.

Its subcellular location is the cytoplasm. This is UPF0294 protein YafD from Salmonella paratyphi C (strain RKS4594).